Reading from the N-terminus, the 318-residue chain is MLTKEFAQRVELSEKQVRKIVQHLEERGYQLSKTEYRGREATDFKEEDIELFKDIADKVKQTNSYDLAFDELEKEKDFLQVIVKNDDKNLPTNQNVAQLVEDLRLEIQKMREERHLLGQMMNQVHQQQQELKELQNQLTSKIDSNSESLKAIQTSQEAIQEAQASQAKVLAESTNKVEKNAVTEDKADSKDSKVAGVNTSTDAKTDTKADNAGDGTTTKVDKEDQISATEAIEKASVEQSKNGNAAETSNKEATIDAEAQHDAEQQVAEAHAEASKQATSNDSLEAKAENDSTASQSEMSEPKPQEEKKGFFARLFNL.

A coiled-coil region spans residues 67–157 (LAFDELEKEK…SLKAIQTSQE (91 aa)). A disordered region spans residues 172 to 318 (ESTNKVEKNA…KGFFARLFNL (147 aa)). 2 stretches are compositionally biased toward basic and acidic residues: residues 175–193 (NKVE…KDSK) and 219–236 (KVDK…EKAS). Polar residues predominate over residues 237–248 (VEQSKNGNAAET). Basic and acidic residues-rich tracts occupy residues 249–274 (SNKE…HAEA) and 300–310 (SEPKPQEEKKG).

This is an uncharacterized protein from Staphylococcus aureus (strain MW2).